Here is a 232-residue protein sequence, read N- to C-terminus: Phosphatidylserine decarboxylase proenzyme (232 aa).

Catalysis depends on Ser190, which acts as the Schiff-base intermediate with substrate; via pyruvic acid. At Ser190 the chain carries Pyruvic acid (Ser); by autocatalysis.

This sequence belongs to the phosphatidylserine decarboxylase family. PSD-A subfamily. Heterodimer of a large membrane-associated beta subunit and a small pyruvoyl-containing alpha subunit. Requires pyruvate as cofactor. Is synthesized initially as an inactive proenzyme. Formation of the active enzyme involves a self-maturation process in which the active site pyruvoyl group is generated from an internal serine residue via an autocatalytic post-translational modification. Two non-identical subunits are generated from the proenzyme in this reaction, and the pyruvate is formed at the N-terminus of the alpha chain, which is derived from the carboxyl end of the proenzyme. The post-translation cleavage follows an unusual pathway, termed non-hydrolytic serinolysis, in which the side chain hydroxyl group of the serine supplies its oxygen atom to form the C-terminus of the beta chain, while the remainder of the serine residue undergoes an oxidative deamination to produce ammonia and the pyruvoyl prosthetic group on the alpha chain.

The protein resides in the cell membrane. It catalyses the reaction a 1,2-diacyl-sn-glycero-3-phospho-L-serine + H(+) = a 1,2-diacyl-sn-glycero-3-phosphoethanolamine + CO2. Its pathway is phospholipid metabolism; phosphatidylethanolamine biosynthesis; phosphatidylethanolamine from CDP-diacylglycerol: step 2/2. Its function is as follows. Catalyzes the formation of phosphatidylethanolamine (PtdEtn) from phosphatidylserine (PtdSer). This is Phosphatidylserine decarboxylase proenzyme from Bradyrhizobium sp. (strain BTAi1 / ATCC BAA-1182).